A 358-amino-acid chain; its full sequence is UDP-3-O-acylglucosamine N-acyltransferase (358 aa).

Residue H248 is the Proton acceptor of the active site.

The protein belongs to the transferase hexapeptide repeat family. LpxD subfamily. In terms of assembly, homotrimer.

It catalyses the reaction a UDP-3-O-[(3R)-3-hydroxyacyl]-alpha-D-glucosamine + a (3R)-hydroxyacyl-[ACP] = a UDP-2-N,3-O-bis[(3R)-3-hydroxyacyl]-alpha-D-glucosamine + holo-[ACP] + H(+). The protein operates within bacterial outer membrane biogenesis; LPS lipid A biosynthesis. Its function is as follows. Catalyzes the N-acylation of UDP-3-O-acylglucosamine using 3-hydroxyacyl-ACP as the acyl donor. Is involved in the biosynthesis of lipid A, a phosphorylated glycolipid that anchors the lipopolysaccharide to the outer membrane of the cell. The polypeptide is UDP-3-O-acylglucosamine N-acyltransferase (Synechococcus sp. (strain WH7803)).